We begin with the raw amino-acid sequence, 215 residues long: Riboflavin synthase (215 aa).

Lumazine-binding repeat units lie at residues 1 to 96 (MFTG…FGGH) and 97 to 193 (IVSG…EQFL). Residues 4 to 6 (GII), 47 to 49 (CLT), 61 to 66 (DVMSET), 100 to 102 (GHI), Lys-135, 144 to 146 (SLT), and 158 to 163 (SIIPHT) contribute to the 2,4-dihydroxypteridine site.

As to quaternary structure, homotrimer.

It catalyses the reaction 2 6,7-dimethyl-8-(1-D-ribityl)lumazine + H(+) = 5-amino-6-(D-ribitylamino)uracil + riboflavin. It participates in cofactor biosynthesis; riboflavin biosynthesis; riboflavin from 2-hydroxy-3-oxobutyl phosphate and 5-amino-6-(D-ribitylamino)uracil: step 2/2. Catalyzes the dismutation of two molecules of 6,7-dimethyl-8-ribityllumazine, resulting in the formation of riboflavin and 5-amino-6-(D-ribitylamino)uracil. This chain is Riboflavin synthase (ribE), found in Actinobacillus pleuropneumoniae (Haemophilus pleuropneumoniae).